We begin with the raw amino-acid sequence, 408 residues long: Phosphoglycerate kinase (408 aa).

Residues 24-26 (DLN), Arg39, 62-65 (HLGR), Arg121, and Arg161 each bind substrate. ATP is bound by residues Lys211, Gly307, Glu338, and 364–367 (GGDS).

The protein belongs to the phosphoglycerate kinase family. Monomer.

It localises to the cytoplasm. It catalyses the reaction (2R)-3-phosphoglycerate + ATP = (2R)-3-phospho-glyceroyl phosphate + ADP. It functions in the pathway carbohydrate degradation; glycolysis; pyruvate from D-glyceraldehyde 3-phosphate: step 2/5. The protein is Phosphoglycerate kinase of Pseudarthrobacter chlorophenolicus (strain ATCC 700700 / DSM 12829 / CIP 107037 / JCM 12360 / KCTC 9906 / NCIMB 13794 / A6) (Arthrobacter chlorophenolicus).